We begin with the raw amino-acid sequence, 190 residues long: Ion-translocating oxidoreductase complex subunit B (190 aa).

Positions 1 to 26 (MTALWIAIAALSALGLLFGLVLGYAA) are hydrophobic. The region spanning 32–90 (EEDPVAEQVDEILPQSQCGQCGYPGCRPYAEAVANGEMINKCAPGGEQVMLKLAELLNV) is the 4Fe-4S domain. Positions 49, 52, 57, 73, 115, 118, 121, 125, 145, 148, 151, and 155 each coordinate [4Fe-4S] cluster. 4Fe-4S ferredoxin-type domains lie at 106–135 (QVAYIDEANCIGCTKCIQACPVDAIVGATR) and 136–165 (AMHTVITDLCTGCDLCVAPCPTDCIEMRPV).

This sequence belongs to the 4Fe4S bacterial-type ferredoxin family. RnfB subfamily. In terms of assembly, the complex is composed of six subunits: RnfA, RnfB, RnfC, RnfD, RnfE and RnfG. It depends on [4Fe-4S] cluster as a cofactor.

The protein resides in the cell inner membrane. Functionally, part of a membrane-bound complex that couples electron transfer with translocation of ions across the membrane. The sequence is that of Ion-translocating oxidoreductase complex subunit B from Serratia proteamaculans (strain 568).